We begin with the raw amino-acid sequence, 57 residues long: UPF0057 membrane protein T23F2.3 (57 aa).

Helical transmembrane passes span 4-24 (TCTD…GVFL) and 36-56 (ILLT…VILA).

This sequence belongs to the UPF0057 (PMP3) family.

Its subcellular location is the membrane. The sequence is that of UPF0057 membrane protein T23F2.3 from Caenorhabditis elegans.